We begin with the raw amino-acid sequence, 158 residues long: Inorganic pyrophosphatase (158 aa).

Residue Glu-8 coordinates Mg(2+). Residues Lys-16, Arg-30, and Tyr-42 each contribute to the substrate site. Mg(2+) is bound by residues Asp-52, Asp-57, Asp-84, and Asp-89. Asp-89 functions as the Proton acceptor in the catalytic mechanism. Tyr-125 lines the substrate pocket.

This sequence belongs to the PPase family. Homohexamer. Mg(2+) serves as cofactor.

Its subcellular location is the cytoplasm. The catalysed reaction is diphosphate + H2O = 2 phosphate + H(+). Functionally, catalyzes the hydrolysis of inorganic pyrophosphate (PPi) forming two phosphate ions. This chain is Inorganic pyrophosphatase, found in Corynebacterium glutamicum (strain ATCC 13032 / DSM 20300 / JCM 1318 / BCRC 11384 / CCUG 27702 / LMG 3730 / NBRC 12168 / NCIMB 10025 / NRRL B-2784 / 534).